Here is a 460-residue protein sequence, read N- to C-terminus: MGETKKMICLVDGEHYFPVVKDSIEILDDLEHIDVVAVVFIGGTEKLQIEDPKEYSEKLGKPVFFGPDPKKIPYDVIKKCVKKYNADIVMDLSDEPVVDYTKRFRIASIVLKEGAVYQGADFKFEPLTEYDVLEKPSIKIIGTGKRIGKTAVSAYAARVIHKHKYNPCVVAMGRGGPREPEIVEGNKIEITAEYLLEQADKGVHAASDHWEDALMSRILTVGCRRCGGGMLGDTFITNVKRGAEIANKLDSDFVIMEGSGAAIPPVKTNRQIVTVGANQPMININNFFGPFRIGLADLVIITMCEEPMATTEKIKKVEKFIKEINPSANVIPTVFRPKPVGNVEGKKVLFATTAPKVVVGKLVNYLESKYGCDVVGVTPHLSNRPLLRRDLKKYINKADLMLTELKAAAVDVATRVAIEAGLDVVYCDNIPVVIDESYGNIDDAIIEVVEMAIDDFKNNR.

As to quaternary structure, homodimer.

Its subcellular location is the cytoplasm. The enzyme catalyses (2R)-2,3-bisphosphoglycerate + ATP + H(+) = cyclic (2R)-2,3-bisphosphoglycerate + ADP + phosphate. Functionally, catalyzes the formation of cyclic 2,3-diphosphoglycerate (cDPG) by formation of an intramolecular phosphoanhydride bond at the expense of ATP. It is also able to catalyze the hydrolysis of cDPG but with significant slower rates (8-10 times). May be involved in thermoadaptation. This chain is Cyclic 2,3-diphosphoglycerate synthetase (cpgS), found in Methanothermus fervidus (strain ATCC 43054 / DSM 2088 / JCM 10308 / V24 S).